The following is a 453-amino-acid chain: Ribosome biogenesis protein SSF2 (453 aa).

Basic residues predominate over residues 1–11; sequence MAKRRQKKRTH. Disordered regions lie at residues 1-22, 275-327, and 373-453; these read MAKRRQKKRTHAQITPEQERDI, KAKH…KAIK, and AKMR…SEVE. Residues 26 to 348 form the Brix domain; sequence MVIRVGQTSL…LVKIEDGICS (323 aa). Residues 373–398 are compositionally biased toward basic and acidic residues; the sequence is AKMRLKEQRRKEQEENIAKKKAVKDA. Basic residues predominate over residues 399-409; it reads KKQRKLERRKA. Positions 440 to 453 are enriched in acidic residues; sequence VPEDLDSDLFSEVE.

As to quaternary structure, part of a complex that includes BRX1, RPF1, RPF2 and SSF1 or SSF2.

Its subcellular location is the nucleus. It localises to the nucleolus. In terms of biological role, required for biogenesis of the 60S ribosomal subunit. The polypeptide is Ribosome biogenesis protein SSF2 (SSF2) (Saccharomyces cerevisiae (strain ATCC 204508 / S288c) (Baker's yeast)).